The sequence spans 248 residues: Exosome complex component Rrp41 (248 aa).

Belongs to the RNase PH family. Rrp41 subfamily. As to quaternary structure, component of the archaeal exosome complex. Forms a hexameric ring-like arrangement composed of 3 Rrp41-Rrp42 heterodimers. The hexameric ring associates with a trimer of Rrp4 and/or Csl4 subunits.

It is found in the cytoplasm. Functionally, catalytic component of the exosome, which is a complex involved in RNA degradation. Has 3'-&gt;5' exoribonuclease activity. Can also synthesize heteromeric RNA-tails. The chain is Exosome complex component Rrp41 from Thermoplasma volcanium (strain ATCC 51530 / DSM 4299 / JCM 9571 / NBRC 15438 / GSS1).